A 316-amino-acid chain; its full sequence is tRNA dimethylallyltransferase (316 aa).

17–24 lines the ATP pocket; that stretch reads GPTASGKT. 19–24 provides a ligand contact to substrate; sequence TASGKT. Interaction with substrate tRNA regions lie at residues 42-45, 166-170, 247-252, and 280-287; these read DSAL, QRLSR, RCVGYR, and KRQITWLR.

This sequence belongs to the IPP transferase family. Monomer. The cofactor is Mg(2+).

The catalysed reaction is adenosine(37) in tRNA + dimethylallyl diphosphate = N(6)-dimethylallyladenosine(37) in tRNA + diphosphate. Functionally, catalyzes the transfer of a dimethylallyl group onto the adenine at position 37 in tRNAs that read codons beginning with uridine, leading to the formation of N6-(dimethylallyl)adenosine (i(6)A). This Enterobacter sp. (strain 638) protein is tRNA dimethylallyltransferase.